The chain runs to 266 residues: Receptor-like protein 5 (266 aa).

The N-terminal stretch at 1 to 19 is a signal peptide; the sequence is MINYRHIVFCLCVMVVVDS. The Extracellular portion of the chain corresponds to 20 to 169; the sequence is RLTPYLAAIE…PTRNKNKPTV (150 aa). 2 LRR repeats span residues 93-117 and 119-143; these read LTSLRVIDLSHNRLKCTIPFEITKL and NLTIVDVSYNQLHGEVPRVRGIVIL. N119 carries an N-linked (GlcNAc...) asparagine glycan. The chain crosses the membrane as a helical span at residues 170 to 190; it reads LVLLLGILVGLVVAGGASFGF. Topologically, residues 191–266 are cytoplasmic; sequence YLYRIRKQPK…TNQNPHLPYM (76 aa).

This sequence belongs to the RLP family.

The protein localises to the cell membrane. The sequence is that of Receptor-like protein 5 from Arabidopsis thaliana (Mouse-ear cress).